Reading from the N-terminus, the 710-residue chain is MRLWRSPLLLLVVVVELFSWADALTRFISADSLSTCMTDSQLSASKLYASYFPDNQSVAFDISIQSLVSTNVSIDVDISAYGIEIKKVIDPCDMEISGFCPMQTGNIALSGSHTLTGEALSILDSIPSIAYTVPDLDAVVTINIYESDTNTQLACVRTTVQNGRSVYHRAVYWVMCMVIGIPLLIFLLISPVLQTPALWEIVETMITLFQFAQIQALYSMMATSLPAIIYSWGRNFMWSMGIIRIGFMQDVFTWYVKSTGGTPSTLVDLGIHANVALAKRGIDLGSLAKRATTTVTTSTSDSITLRGIKRISYMMGIETTNFFATGFSFFIILLFFSLLVAMASRFIVEMVLLASRNQALKKQRIRLYWKSISKGFFYRVIFVGFTQMSVLSMWEIYTRDSSALAFLSMYVIVDMAVLLCYAFVRTIQIIRKTGPYSHPDVLYNLYSDTQHLMRWGFMYVQLDVRFFYFTFPLLLITLVRSMFIGFGQGSPKVQGCAMFGISVVVFALMVILRPYATKHMNTLHIGVALMNLISGSFILVMCQAFYVEELARQVIGIIFFALNAITMLLLILGIFIRTLIVLFRKSGHGTYYRILDDQSEKATSYNKSIKDMSSSDMAFSDPAYSGTTLRSSVDLNTPEYPFSNRNDSDSTFTNNKYVSPWDAIEEASYANLRGNTDVEQPFMESDYTRISENNNNAERRRKPLPNNAFR.

The first 23 residues, 1 to 23 (MRLWRSPLLLLVVVVELFSWADA), serve as a signal peptide directing secretion. The next 9 helical transmembrane spans lie at 173–193 (WVMCMVIGIPLLIFLLISPVL), 197–217 (ALWEIVETMITLFQFAQIQAL), 322–342 (FFATGFSFFIILLFFSLLVAM), 376–396 (FFYRVIFVGFTQMSVLSMWEI), 404–424 (LAFLSMYVIVDMAVLLCYAFV), 466–486 (FFYFTFPLLLITLVRSMFIGF), 492–512 (KVQGCAMFGISVVVFALMVIL), 525–545 (IGVALMNLISGSFILVMCQAF), and 555–575 (IGIIFFALNAITMLLLILGIF). 2 positions are modified to phosphoserine: Ser-599 and Ser-632. The interval 689–710 (RISENNNNAERRRKPLPNNAFR) is disordered.

Belongs to the transient receptor potential (TRP) ion channel family. As to quaternary structure, interacts with rho1.

The protein localises to the cell membrane. It localises to the golgi apparatus membrane. Functionally, acts as a key signaling component in the regulation of cell shape and cell wall synthesis through interaction with GTPase Rho1. This is TRP-like ion channel pkd2 (pkd2) from Schizosaccharomyces pombe (strain 972 / ATCC 24843) (Fission yeast).